Here is a 139-residue protein sequence, read N- to C-terminus: Putative nickel-responsive regulator (139 aa).

The Ni(2+) site is built by histidine 79, histidine 90, histidine 92, and cysteine 98.

The protein belongs to the transcriptional regulatory CopG/NikR family. The cofactor is Ni(2+).

Functionally, transcriptional regulator. This Solibacter usitatus (strain Ellin6076) protein is Putative nickel-responsive regulator.